The sequence spans 91 residues: uncharacterized protein (91 aa).

Its subcellular location is the plastid. It is found in the chloroplast. This is an uncharacterized protein from Phalaenopsis aphrodite subsp. formosana (Moth orchid).